The chain runs to 326 residues: Glyoxylate/hydroxypyruvate reductase B (326 aa).

Residues arginine 237 and glutamate 266 contribute to the active site. Histidine 285 functions as the Proton donor in the catalytic mechanism.

Belongs to the D-isomer specific 2-hydroxyacid dehydrogenase family. GhrB subfamily. As to quaternary structure, homodimer.

It localises to the cytoplasm. It carries out the reaction glycolate + NADP(+) = glyoxylate + NADPH + H(+). The enzyme catalyses (R)-glycerate + NAD(+) = 3-hydroxypyruvate + NADH + H(+). The catalysed reaction is (R)-glycerate + NADP(+) = 3-hydroxypyruvate + NADPH + H(+). Catalyzes the NADPH-dependent reduction of glyoxylate and hydroxypyruvate into glycolate and glycerate, respectively. In Yersinia enterocolitica serotype O:8 / biotype 1B (strain NCTC 13174 / 8081), this protein is Glyoxylate/hydroxypyruvate reductase B.